A 517-amino-acid polypeptide reads, in one-letter code: Serine hydroxymethyltransferase 2, mitochondrial (517 aa).

The N-terminal 29 residues, 1–29 (MALALRRLSSSVKKPISLLSSNGGSLRFM), are a transit peptide targeting the mitochondrion. L-serine is bound at residue Ser-82. Pemetrexed contacts are provided by residues Ser-82, Tyr-102, Glu-104, Tyr-112, 148–150 (SGS), and His-177. The L-serine site is built by Glu-104 and Tyr-112. Glu-104 contributes to the methotrexate binding site. Methotrexate is bound at residue 184 to 186 (TDT). Residues Ser-232 and His-260 each coordinate pemetrexed. Residues His-260 and Lys-286 each contribute to the L-serine site. Residue Lys-286 is modified to N6-(pyridoxal phosphate)lysine. Gly-331 provides a ligand contact to pemetrexed. Lys-414 contributes to the methotrexate binding site. Position 430 (Arg-430) interacts with L-serine. Arg-430 serves as a coordination point for pemetrexed.

It belongs to the SHMT family. In terms of assembly, homotetramer. Pyridoxal 5'-phosphate is required as a cofactor. As to expression, ubiquitous. Mainly expressed in the shoot apical meristem and roots. Also detected in the leaf vasculature, especially in the protoxylem and adjacent cell layers.

Its subcellular location is the mitochondrion. It carries out the reaction (6R)-5,10-methylene-5,6,7,8-tetrahydrofolate + glycine + H2O = (6S)-5,6,7,8-tetrahydrofolate + L-serine. It functions in the pathway one-carbon metabolism; tetrahydrofolate interconversion. Inhibited by the antifolate drugs methotrexate and pemetrexed. Functionally, functions outside the photorespiratory pathway in catalyzing the interconversion of serine and glycine with the conversion of tetrahydrofolate (THF) into 5,10-methylene-THF. This chain is Serine hydroxymethyltransferase 2, mitochondrial, found in Arabidopsis thaliana (Mouse-ear cress).